We begin with the raw amino-acid sequence, 319 residues long: MKRIGVLTSGGDSPGMNAAIRAVVRKAIFHDIEVYGIYHGYAGLISGHIEKLELGSVGDIIPRGGTKLYTARCLEFKDPEVRLKGIEQLKKHGIEGLVVIGGDGSYQGAKKLTEQGFPCVGVPGTIDNDIPGTDFTIGFDTALNTVIDAIDKIRDTATSHERTYVIEVMGRHAGDIALWAGLADGAETILIPEEEYDMDDVIARLKRGSERGKKHSIIVVAEGVGSAIDIGKHIEEATNFDTRVTVLGHVQRGGSPSAQDRVLASRLGARAVELLIAGKGGRCVGIQDNKLVDHDIIEALAQKHTIDKDMYQLSKELSI.

Position 11 (Gly-11) interacts with ATP. ADP is bound at residue 21 to 25 (RAVVR). Residues 72-73 (RC) and 102-105 (GDGS) each bind ATP. Asp-103 provides a ligand contact to Mg(2+). 125–127 (TID) is a substrate binding site. The active-site Proton acceptor is the Asp-127. An ADP-binding site is contributed by Arg-154. Substrate-binding positions include Arg-162 and 169–171 (MGR). ADP contacts are provided by residues 185–187 (GAE), Arg-211, and 213–215 (KKH). Substrate-binding positions include Glu-222, Arg-243, and 249 to 252 (HVQR).

Belongs to the phosphofructokinase type A (PFKA) family. ATP-dependent PFK group I subfamily. Prokaryotic clade 'B1' sub-subfamily. Homotetramer. Mg(2+) serves as cofactor.

The protein resides in the cytoplasm. It carries out the reaction beta-D-fructose 6-phosphate + ATP = beta-D-fructose 1,6-bisphosphate + ADP + H(+). It participates in carbohydrate degradation; glycolysis; D-glyceraldehyde 3-phosphate and glycerone phosphate from D-glucose: step 3/4. Its activity is regulated as follows. Allosterically activated by ADP and other diphosphonucleosides, and allosterically inhibited by phosphoenolpyruvate. Its function is as follows. Catalyzes the phosphorylation of D-fructose 6-phosphate to fructose 1,6-bisphosphate by ATP, the first committing step of glycolysis. The protein is ATP-dependent 6-phosphofructokinase of Bacillus cereus (strain ATCC 14579 / DSM 31 / CCUG 7414 / JCM 2152 / NBRC 15305 / NCIMB 9373 / NCTC 2599 / NRRL B-3711).